A 231-amino-acid polypeptide reads, in one-letter code: MAKLTKRQKAIAAAIEANKVYTLEEAVQVLNNLPAAKFKESLDVSVNLGVDPRKSDQVVRGATTLPAGTGKTVRVAVFAQGAAAEAAKAEGADIVGFDDLAESIQQGNLDFDVVIAAPDAMRVVGKLGTILGPRGLMPNPKVGTVTPDVANAVKNAKAGQARYRVDKAGIIHAAIGQVGFTAEAIRQNVETLVADLKKLKPATSKGVYIKKITLSSTMGPGLTVDVNNVTN.

This sequence belongs to the universal ribosomal protein uL1 family. As to quaternary structure, part of the 50S ribosomal subunit.

Functionally, binds directly to 23S rRNA. The L1 stalk is quite mobile in the ribosome, and is involved in E site tRNA release. In terms of biological role, protein L1 is also a translational repressor protein, it controls the translation of the L11 operon by binding to its mRNA. The chain is Large ribosomal subunit protein uL1 from Acinetobacter baylyi (strain ATCC 33305 / BD413 / ADP1).